A 300-amino-acid chain; its full sequence is Glycine--tRNA ligase alpha subunit (300 aa).

It belongs to the class-II aminoacyl-tRNA synthetase family. In terms of assembly, tetramer of two alpha and two beta subunits.

The protein resides in the cytoplasm. The catalysed reaction is tRNA(Gly) + glycine + ATP = glycyl-tRNA(Gly) + AMP + diphosphate. This Pseudoalteromonas translucida (strain TAC 125) protein is Glycine--tRNA ligase alpha subunit.